Reading from the N-terminus, the 1627-residue chain is Adhesin P1 (1627 aa).

Positions Met-1–Thr-59 are cleaved as a signal peptide. Disordered regions lie at residues Leu-219 to Gly-238, Asn-252 to Pro-355, Trp-898 to Asp-953, and Ser-1274 to Asp-1362. The segment covering Thr-224 to Gly-234 has biased composition (polar residues). Residues Thr-261–Gly-276 show a composition bias toward low complexity. Residues Thr-282–Ser-297 are compositionally biased toward basic and acidic residues. Polar residues-rich tracts occupy residues Ala-903–Asn-933, Gln-939–Asp-953, and Ser-1274–Thr-1297. The span at Ser-1307–Gln-1320 shows a compositional bias: gly residues. The span at Ser-1341–Asn-1352 shows a compositional bias: low complexity. Positions Gly-1403–Ile-1415 are cytadherence epitope. The helical transmembrane segment at Ala-1527–Ile-1547 threads the bilayer. A disordered region spans residues Gln-1589–Ala-1627. The span at Ala-1604–Ala-1627 shows a compositional bias: pro residues.

The protein belongs to the adhesin P1 family.

It localises to the cell membrane. The protein localises to the cell projection. The protein resides in the attachment organelle. Its subcellular location is the cell surface. In terms of biological role, the protein is the major adhesin mediating the attachment of this mycoplasma to respiratory epithelium. This chain is Adhesin P1 (mgpA), found in Mycoplasma pneumoniae (strain ATCC 29342 / M129 / Subtype 1) (Mycoplasmoides pneumoniae).